A 410-amino-acid polypeptide reads, in one-letter code: Lissencephaly-1 homolog (410 aa).

One can recognise a LisH domain in the interval 7–39 (QRDELNRAIADYLRSNGYEEAYSVFKKEAELDM). Residues 56 to 82 (TSVIRLQKKVMELESKLNEAKEEFTSG) are a coiled coil. WD repeat units follow at residues 106 to 147 (GHRS…RTLK), 148 to 189 (GHTD…RTMH), 190 to 229 (GHDH…CVKT), 232 to 271 (GHRE…CKAE), 274 to 333 (EHEH…CLMT), 336 to 377 (GHDN…KTLN), and 379 to 410 (HEHF…WECR).

Belongs to the WD repeat LIS1/nudF family. Can self-associate. Component of the cytosolic PAF-AH (I) heterotetrameric enzyme, which is composed of PAFAH1B1 (beta), PAFAH1B2 (alpha2) and PAFAH1B3 (alpha1) subunits. The catalytic activity of the enzyme resides in the alpha1 (PAFAH1B3) and alpha2 (PAFAH1B2) subunits, whereas the beta subunit (PAFAH1B1) has regulatory activity. Trimer formation is not essential for the catalytic activity. Interacts with dynein, dynactin, nde1 and ndel1.

It localises to the cytoplasm. Its subcellular location is the cytoskeleton. It is found in the microtubule organizing center. The protein localises to the centrosome. Regulatory subunit (beta subunit) of the cytosolic type I platelet-activating factor (PAF) acetylhydrolase (PAF-AH (I)), an enzyme that catalyzes the hydrolyze of the acetyl group at the sn-2 position of PAF and its analogs and participates in PAF inactivation. Regulates the PAF-AH (I) activity in a catalytic dimer composition-dependent manner. Positively regulates the activity of the minus-end directed microtubule motor protein dynein. May enhance dynein-mediated microtubule sliding by targeting dynein to the microtubule plus end. Required for several dynein- and microtubule-dependent processes such as the maintenance of Golgi integrity, the peripheral transport of microtubule fragments and the coupling of the nucleus and centrosome. May be required for proliferation of neuronal precursors and neuronal migration. The polypeptide is Lissencephaly-1 homolog (pafah1b1) (Xenopus laevis (African clawed frog)).